We begin with the raw amino-acid sequence, 310 residues long: tRNA dimethylallyltransferase (310 aa).

11 to 18 contacts ATP; sequence GPTGVGKT. Substrate is bound at residue 13-18; that stretch reads TGVGKT.

The protein belongs to the IPP transferase family. As to quaternary structure, monomer. Mg(2+) is required as a cofactor.

It carries out the reaction adenosine(37) in tRNA + dimethylallyl diphosphate = N(6)-dimethylallyladenosine(37) in tRNA + diphosphate. Its function is as follows. Catalyzes the transfer of a dimethylallyl group onto the adenine at position 37 in tRNAs that read codons beginning with uridine, leading to the formation of N6-(dimethylallyl)adenosine (i(6)A). This is tRNA dimethylallyltransferase from Latilactobacillus sakei subsp. sakei (strain 23K) (Lactobacillus sakei subsp. sakei).